We begin with the raw amino-acid sequence, 584 residues long: Cilia- and flagella-associated protein 184 (584 aa).

Composition is skewed to basic and acidic residues over residues 1-18 (MDSHYGDIEGKDRAEEGL), 42-57 (PEPKPEPEPTQGREPE), and 67-82 (SKAKDSEGIDYAHVEV). The tract at residues 1–243 (MDSHYGDIEG…ASTEEFEWTA (243 aa)) is disordered. Over residues 119-146 (DKDEDEDEDEDEDEDEDEDEDEDEDEGE) the composition is skewed to acidic residues. The segment covering 189–232 (AKEKARESLKKRDSEEIEGTDRERHKSTEEQLHPGEAKEEEKQK) has biased composition (basic and acidic residues). Coiled coils occupy residues 317–470 (LAML…SNVQ) and 530–561 (LLGKESLLRDLEEKVEKTEMLNRRLESLKRHH).

The protein belongs to the CFAP184 family. Forms a complex with CFAP263; the interaction is required for functional activity in cilia.

It is found in the cell projection. The protein localises to the cilium. It localises to the cytoplasm. The protein resides in the cytoskeleton. Its subcellular location is the microtubule organizing center. It is found in the centrosome. In terms of biological role, in complex with CFAP263, acts as a regulator of ciliary beating that connects radial spoke 3 (RS3) to the inner dynein arm (IDA) and the nexin-dynein regulatory complex (N-DRC). The complex is positioned parallel to N-DRC and forms a connection between the arch at the base of RS3, the IDA tail and N-DRC. The polypeptide is Cilia- and flagella-associated protein 184 (Cfap184) (Mus musculus (Mouse)).